Consider the following 273-residue polypeptide: 4-diphosphocytidyl-2-C-methyl-D-erythritol kinase (273 aa).

Lys-12 is an active-site residue. Position 90-100 (90-100) interacts with ATP; it reads PVASGIGGGSA. Asp-122 is an active-site residue.

It belongs to the GHMP kinase family. IspE subfamily.

The catalysed reaction is 4-CDP-2-C-methyl-D-erythritol + ATP = 4-CDP-2-C-methyl-D-erythritol 2-phosphate + ADP + H(+). It participates in isoprenoid biosynthesis; isopentenyl diphosphate biosynthesis via DXP pathway; isopentenyl diphosphate from 1-deoxy-D-xylulose 5-phosphate: step 3/6. Catalyzes the phosphorylation of the position 2 hydroxy group of 4-diphosphocytidyl-2C-methyl-D-erythritol. This is 4-diphosphocytidyl-2-C-methyl-D-erythritol kinase from Paracoccus denitrificans (strain Pd 1222).